The sequence spans 292 residues: NAD kinase (292 aa).

The Proton acceptor role is filled by aspartate 64. NAD(+) contacts are provided by residues 64–65, 138–139, arginine 149, arginine 166, aspartate 168, 179–184, and glutamine 238; these read DG, ND, and TGYAVS.

This sequence belongs to the NAD kinase family. A divalent metal cation is required as a cofactor.

The protein resides in the cytoplasm. It carries out the reaction NAD(+) + ATP = ADP + NADP(+) + H(+). Involved in the regulation of the intracellular balance of NAD and NADP, and is a key enzyme in the biosynthesis of NADP. Catalyzes specifically the phosphorylation on 2'-hydroxyl of the adenosine moiety of NAD to yield NADP. This chain is NAD kinase, found in Oleidesulfovibrio alaskensis (strain ATCC BAA-1058 / DSM 17464 / G20) (Desulfovibrio alaskensis).